Here is a 262-residue protein sequence, read N- to C-terminus: 3-methyl-2-oxobutanoate hydroxymethyltransferase (262 aa).

The Mg(2+) site is built by D43 and D82. Residues 43-44 (DS), D82, and K111 each bind 3-methyl-2-oxobutanoate. E113 contacts Mg(2+). E180 (proton acceptor) is an active-site residue.

It belongs to the PanB family. As to quaternary structure, homodecamer; pentamer of dimers. Mg(2+) serves as cofactor.

The protein resides in the cytoplasm. It catalyses the reaction 3-methyl-2-oxobutanoate + (6R)-5,10-methylene-5,6,7,8-tetrahydrofolate + H2O = 2-dehydropantoate + (6S)-5,6,7,8-tetrahydrofolate. Its pathway is cofactor biosynthesis; coenzyme A biosynthesis. Functionally, catalyzes the reversible reaction in which hydroxymethyl group from 5,10-methylenetetrahydrofolate is transferred onto alpha-ketoisovalerate to form ketopantoate. The chain is 3-methyl-2-oxobutanoate hydroxymethyltransferase from Pyrobaculum aerophilum (strain ATCC 51768 / DSM 7523 / JCM 9630 / CIP 104966 / NBRC 100827 / IM2).